Reading from the N-terminus, the 338-residue chain is Malate dehydrogenase, mitochondrial (338 aa).

The N-terminal 24 residues, 1 to 24 (MLSALARPAGAALRRSFSTSXQNN), are a transit peptide targeting the mitochondrion. NAD(+)-binding positions include 31–37 (GASGGIG) and Asp-57. An O-linked (GlcNAc) serine glycan is attached at Ser-33. An N6-acetyllysine; alternate mark is found at Lys-78 and Lys-91. An N6-succinyllysine; alternate mark is found at Lys-78 and Lys-91. 2 residues coordinate substrate: Arg-104 and Arg-110. Residues Asn-117 and 140–142 (ISN) each bind NAD(+). Substrate is bound at residue Asn-142. At Lys-165 the chain carries N6-acetyllysine. Arg-176 provides a ligand contact to substrate. Lys-185 carries the N6-acetyllysine; alternate modification. Residue Lys-185 is modified to N6-succinyllysine; alternate. The active-site Proton acceptor is His-200. Lys-203 carries the N6-succinyllysine modification. Lys-215 and Lys-239 each carry N6-acetyllysine; alternate. Lys-215 and Lys-239 each carry N6-succinyllysine; alternate. Lys-239 carries the N6-malonyllysine; alternate modification. Ser-246 bears the Phosphoserine mark. Met-251 provides a ligand contact to NAD(+). An N6-succinyllysine modification is found at Lys-269. 5 positions are modified to N6-acetyllysine; alternate: Lys-296, Lys-301, Lys-307, Lys-314, and Lys-324. N6-succinyllysine; alternate occurs at positions 296, 301, 307, 314, and 324. The residue at position 307 (Lys-307) is an N6-malonyllysine; alternate. Residue Ser-326 is modified to Phosphoserine. Residues Lys-328, Lys-329, and Lys-335 each carry the N6-acetyllysine; alternate modification. Residue Lys-328 is modified to N6-succinyllysine; alternate. Residue Lys-329 is modified to N6-malonyllysine; alternate. Lys-335 is modified (N6-succinyllysine; alternate).

The protein belongs to the LDH/MDH superfamily. MDH type 1 family. As to quaternary structure, homodimer. In terms of processing, acetylation is enhanced after treatment either with trichostin A (TCA) or with nicotinamide (NAM) with the appearance of tri- and tetraacetylations. Glucose also increases acetylation.

The protein resides in the mitochondrion matrix. It catalyses the reaction (S)-malate + NAD(+) = oxaloacetate + NADH + H(+). With respect to regulation, enzyme activity is enhanced by acetylation. This is Malate dehydrogenase, mitochondrial (MDH2) from Sus scrofa (Pig).